The following is a 69-amino-acid chain: Cell division protein CrgA (69 aa).

Helical transmembrane passes span 14 to 34 (VWFPTIMFGLMGTGAVWMVLF) and 45 to 65 (AVGTWNILIAFGIIMAGFAMM).

It belongs to the CrgA family.

Its subcellular location is the cell membrane. In terms of biological role, involved in cell division. The polypeptide is Cell division protein CrgA (Tropheryma whipplei (strain TW08/27) (Whipple's bacillus)).